A 426-amino-acid polypeptide reads, in one-letter code: Glutamate-1-semialdehyde 2,1-aminomutase (426 aa).

The residue at position 265 (Lys265) is an N6-(pyridoxal phosphate)lysine.

It belongs to the class-III pyridoxal-phosphate-dependent aminotransferase family. HemL subfamily. Homodimer. Requires pyridoxal 5'-phosphate as cofactor.

It is found in the cytoplasm. It catalyses the reaction (S)-4-amino-5-oxopentanoate = 5-aminolevulinate. It functions in the pathway porphyrin-containing compound metabolism; protoporphyrin-IX biosynthesis; 5-aminolevulinate from L-glutamyl-tRNA(Glu): step 2/2. The polypeptide is Glutamate-1-semialdehyde 2,1-aminomutase (Paraburkholderia phymatum (strain DSM 17167 / CIP 108236 / LMG 21445 / STM815) (Burkholderia phymatum)).